We begin with the raw amino-acid sequence, 663 residues long: MGVYRIRVSTGDSKYAGSNNEVYLWLVGQHGEASLGKLLRPCRDSEAEFKVDVSEYLGPLLFVRVQKWHYLTDDAWFCNWISVKGPGDQGSEYMFPCYRWVQGRSILSLPEGTGCTVVEDSQGLFRKHREEELEERRSLYRWGNWKDGSILNVAAASISDLPVDQRFREDKRIEFEASQVIGVMDTVVNFPINTVTCWKSLDDFNCVFKSGHTKMAERVRNSWKEDAFFGYQFLNGANPMVLKRSTCLPARLVFPPGMEKLQAQLNKELQKGTLFEADFFLLDGIKANVILCSQQYLAAPLVMLKLMPDGQLLPIAIQLELPKTGSTPPPIFTPSDPPMDWLLAKCWVRSSDLQLHELQAHLLRGHLMAEVFAVATMRCLPSVHPVFKLLVPHLLYTMEINVRARSDLISERGFFDKAMSTGGGGHLDLLKQAGAFLTYCSLCPPDDLAERGLLDIETCFYAKDALRLWQIMNRYVVGMFNLHYKTDKAVQDDYELQSWCREITDIGLQGAQDRGFPTSLQSRAQACYFITMCIFTCTAQHSSVHLGQLDWFYWVPNAPCTMRLPPPTTKEATMEKLMATLPNPNQSTLQINVVWLLGRRQAVMVPLGQHSEEHFPNPEAKAVLKKFREELAALDKEIEIRNKSLDIPYEYLRPSMVENSVAI.

The PLAT domain occupies 2-115 (GVYRIRVSTG…ILSLPEGTGC (114 aa)). Residues 116-663 (TVVEDSQGLF…PSMVENSVAI (548 aa)) form the Lipoxygenase domain. Phosphoserine is present on Ser149. Fe cation contacts are provided by His361, His366, His541, His545, and Ile663.

This sequence belongs to the lipoxygenase family. As to quaternary structure, interacts with PEBP1; in response to IL13/interleukin-13, prevents the interaction of PEBP1 with RAF1 to activate the ERK signaling cascade. Fe cation is required as a cofactor. As to expression, detected in leukocytes, lung and aorta.

It is found in the cytoplasm. Its subcellular location is the cytosol. The protein localises to the cell membrane. The protein resides in the lipid droplet. It catalyses the reaction (5Z,8Z,11Z,14Z)-eicosatetraenoate + O2 = (12S)-hydroperoxy-(5Z,8Z,10E,14Z)-eicosatetraenoate. The enzyme catalyses (5Z,8Z,11Z,14Z)-eicosatetraenoate + O2 = (15S)-hydroperoxy-(5Z,8Z,11Z,13E)-eicosatetraenoate. It carries out the reaction (9Z,12Z)-octadecadienoate + O2 = (13S)-hydroperoxy-(9Z,11E)-octadecadienoate. The catalysed reaction is (12S)-hydroperoxy-(5Z,8Z,10E,14Z)-eicosatetraenoate = (8S)-hydroxy-(11S,12S)-epoxy-(5Z,9E,14Z)-eicosatrienoate. It catalyses the reaction (5Z,8Z,11Z,14Z)-eicosatetraenoate + 2 O2 = (14R,15S)-dihydroperoxy-(5Z,8Z,10E,12E)-eicosatetraenoate. The enzyme catalyses (5Z,8Z,11Z,14Z)-eicosatetraenoate + 2 O2 = (8S,15S)-dihydroperoxy-(5Z,9E,11Z,13E)-eicosatetraenoate. It carries out the reaction (14S,15R)-epoxy-(5Z,8Z,11Z)-eicosatrienoate + O2 = (8S)-hydroperoxy-(14S,15R)-epoxy-(5Z,9E,11Z)-eicosatrienoate. The catalysed reaction is (14S,15R)-epoxy-(5Z,8Z,11Z)-eicosatrienoate + O2 = (12S)-hydroperoxy-(14S,15R)-epoxy-(5Z,8Z,10E)-eicosatrienoate. It catalyses the reaction (14R,15S)-epoxy-(5Z,8Z,11Z)-eicosatrienoate + O2 = (5S)-hydroperoxy-(14R,15S)-epoxy-(6E,8Z,11Z)-eicosatrienoate. The enzyme catalyses (14R,15S)-epoxy-(5Z,8Z,11Z)-eicosatrienoate + O2 = (12S)-hydroperoxy-(14R,15S)-epoxy-(5Z,8Z,10E)-eicosatrienoate. It carries out the reaction (15R)-hydroperoxy-(5Z,8Z,11Z,13E)-eicosatetraenoate = 15-oxo-(5Z,8Z,11Z,13E)-eicosatetraenoate + H2O. The catalysed reaction is (15S)-hydroperoxy-(5Z,8Z,11Z,13E)-eicosatetraenoate = (14S,15S)-epoxy-(5Z,8Z,10E,12E)-eicosatetraenoate + H2O. It catalyses the reaction (4Z,7Z,10Z,13Z,16Z)-docosapentaenoate + O2 = 14-hydroperoxy-(4Z,7Z,10Z,12E,16Z)-docosapentaenoate. The enzyme catalyses (7Z,10Z,13Z,16Z,19Z)-docosapentaenoate + O2 = 14-hydroperoxy-(7Z,10Z,12E,16Z,19Z)-docosapentaenoate. It carries out the reaction (4Z,7Z,10Z,13Z,16Z,19Z)-docosahexaenoate + O2 = (14S)-hydroperoxy-(4Z,7Z,10Z,12E,16Z,19Z)-docosahexaenoate. The catalysed reaction is (4Z,7Z,10Z,13Z,16Z,19Z)-docosahexaenoate + O2 = (17S)-hydroperoxy-(4Z,7Z,10Z,13Z,15E,19Z)-docosahexaenoate. It catalyses the reaction (7S)-hydroperoxy-(4Z,8E,10Z,13Z,16Z,19Z)-docosahexaenoate + O2 = (7S,14S)-dihydroperoxy-(4Z,8E,10Z,12E,16Z,19Z)-docosahexaenoate. The enzyme catalyses (7S)-hydroperoxy-(4Z,8E,10Z,13Z,16Z,19Z)-docosahexaenoate + O2 = (7S,17S)-dihydroperoxy-(4Z,8E,10Z,13Z,15E,19Z)-docosahexaenoate. It carries out the reaction (4Z,7Z,10Z,13Z,16Z,19Z)-docosahexaenoate + O2 = (11S)-hydroperoxy-(4Z,7Z,9E,13Z,16Z,19Z)-docosahexaenoate. The catalysed reaction is N-(5Z,8Z,11Z,14Z)-eicosatetraenoyl-taurine + O2 = N-(12S)-hydroperoxy-(5Z,8Z,10E,14Z)-eicosatetraenoyl-taurine. It catalyses the reaction N-(5Z,8Z,11Z,14Z)-eicosatetraenoyl-gamma-aminobutanoate + O2 = N-(12S)-hydroperoxy-(5Z,8Z,10E,14Z)-eicosatetraenoyl-gamma-aminobutanoate. The enzyme catalyses N-(5Z,8Z,11Z,14Z)-eicosatetraenoyl-glycine + O2 = N-(12S)-hydroperoxy-(5Z,8Z,10E,14Z)-eicosatetraenoyl-glycine. It carries out the reaction N-(5Z,8Z,11Z,14Z)-eicosatetraenoyl-L-alanine + O2 = N-(12S)-hydroperoxy-(5Z,8Z,10E,14Z)-eicosatetraenoyl-alanine. The catalysed reaction is N-(5Z,8Z,11Z,14Z)-eicosatetraenoyl-taurine + O2 = N-(15S)-hydroperoxy-(5Z,8Z,11Z,13E)-eicosatetraenoyl-taurine. It catalyses the reaction N-(5Z,8Z,11Z,14Z)-eicosatetraenoyl-gamma-aminobutanoate + O2 = N-(15S)-hydroperoxy-(5Z,8Z,11Z,13E)-eicosatetraenoyl-gamma-aminobutanoate. The enzyme catalyses N-(5Z,8Z,11Z,14Z)-eicosatetraenoyl-glycine + O2 = N-(15S)-hydroperoxy-(5Z,8Z,11Z,13E)-eicosatetraenoyl-glycine. It carries out the reaction N-(5Z,8Z,11Z,14Z)-eicosatetraenoyl-L-alanine + O2 = N-(15S)-hydroperoxy-(5Z,8Z,11Z,13E)-eicosatetraenoyl-alanine. Its pathway is lipid metabolism; hydroperoxy eicosatetraenoic acid biosynthesis. Functionally, non-heme iron-containing dioxygenase that catalyzes the stereo-specific peroxidation of free and esterified polyunsaturated fatty acids generating a spectrum of bioactive lipid mediators. It inserts peroxyl groups at C12 or C15 of arachidonate ((5Z,8Z,11Z,14Z)-eicosatetraenoate) producing both 12-hydroperoxyeicosatetraenoate/12-HPETE and 15-hydroperoxyeicosatetraenoate/15-HPETE. It may then act on 12-HPETE to produce hepoxilins, which may show pro-inflammatory properties. Can also peroxidize linoleate ((9Z,12Z)-octadecadienoate) to 13-hydroperoxyoctadecadienoate. May participate in the sequential oxidations of DHA ((4Z,7Z,10Z,13Z,16Z,19Z)-docosahexaenoate) to generate specialized pro-resolving mediators (SPMs)like resolvin D5 ((7S,17S)-diHPDHA) and (7S,14S)-diHPDHA, that actively down-regulate the immune response and have anti-aggregation properties with platelets. Can convert epoxy fatty acids to hydroperoxy-epoxides derivatives followed by an intramolecular nucleophilic substitution leading to the formation of monocyclic endoperoxides. Plays an important role during the maintenance of self-tolerance by peroxidizing membrane-bound phosphatidylethanolamine which can then signal the sorting process for clearance of apoptotic cells during inflammation and prevent an autoimmune response. In addition to its role in the immune and inflammatory responses, this enzyme may play a role in epithelial wound healing in the cornea through production of lipoxin A4 (LXA(4)) and docosahexaenoic acid-derived neuroprotectin D1 (NPD1; 10R,17S-HDHA), both lipid autacoids exhibit anti-inflammatory and neuroprotective properties. Furthermore, it may regulate actin polymerization which is crucial for several biological processes such as the phagocytosis of apoptotic cells. It is also implicated in the generation of endogenous ligands for peroxisome proliferator activated receptor (PPAR-gamma), hence modulating macrophage development and function. It may also exert a negative effect on skeletal development by regulating bone mass through this pathway. As well as participates in ER stress and downstream inflammation in adipocytes, pancreatic islets, and liver. Finally, it is also involved in the cellular response to IL13/interleukin-13. The protein is Polyunsaturated fatty acid lipoxygenase ALOX15 of Rattus norvegicus (Rat).